Reading from the N-terminus, the 354-residue chain is Stearoyl-CoA desaturase (354 aa).

Residues 1 to 28 (MPGHLLQEEMTSSYTTTTTTITEPPSES) form a disordered region. Residues 1–67 (MPGHLLQEEM…EGPPPKLEYV (67 aa)) lie on the Cytoplasmic side of the membrane. Residues 8–28 (EEMTSSYTTTTTTITEPPSES) show a composition bias toward low complexity. The chain crosses the membrane as a helical span at residues 68 to 88 (WRNIILMALLHLGALYGLVLV). Asparagine 70 contacts substrate. Topologically, residues 89–92 (PSSK) are lumenal. Residues 93–113 (VYTLLWAFVYYVISIEGIGAG) form a helical membrane-spanning segment. Over 114 to 212 (VHRLWSHRTY…EKLVMFQRRY (99 aa)) the chain is Cytoplasmic. Histidine 115 and histidine 120 together coordinate Fe cation. A Histidine box-1 motif is present at residues 115-120 (HRLWSH). Substrate-binding residues include asparagine 143, arginine 150, and aspartate 151. Fe cation-binding residues include histidine 152, histidine 155, and histidine 156. A Histidine box-2 motif is present at residues 152-156 (HRAHH). 2 residues coordinate substrate: arginine 183 and lysine 184. Serine 198 is modified (phosphoserine). The chain crosses the membrane as a helical span at residues 213–232 (YKPAILLMCFILPTFVPWYF). Over 233–236 (WGEA) the chain is Lumenal. Residues 237–258 (FVNSLCVSTFLRYTLVLNATWL) traverse the membrane as a helical segment. Tryptophan 257 contacts substrate. Residues 259-354 (VNSAAHLYGY…RTGDGSCKSG (96 aa)) are Cytoplasmic-facing. 4 residues coordinate Fe cation: histidine 264, histidine 293, histidine 296, and histidine 297. The Histidine box-3 motif lies at 293-297 (HNYHH).

It belongs to the fatty acid desaturase type 1 family. Requires Fe(2+) as cofactor.

Its subcellular location is the endoplasmic reticulum membrane. The catalysed reaction is octadecanoyl-CoA + 2 Fe(II)-[cytochrome b5] + O2 + 2 H(+) = (9Z)-octadecenoyl-CoA + 2 Fe(III)-[cytochrome b5] + 2 H2O. It catalyses the reaction hexadecanoyl-CoA + 2 Fe(II)-[cytochrome b5] + O2 + 2 H(+) = (9Z)-hexadecenoyl-CoA + 2 Fe(III)-[cytochrome b5] + 2 H2O. In terms of biological role, stearoyl-CoA desaturase that utilizes O(2) and electrons from reduced cytochrome b5 to introduce the first double bond into saturated fatty acyl-CoA substrates. Catalyzes the insertion of a cis double bond at the delta-9 position into fatty acyl-CoA substrates including palmitoyl-CoA and stearoyl-CoA. Gives rise to a mixture of 16:1 and 18:1 unsaturated fatty acids. Plays an important role in lipid biosynthesis. Plays an important role in regulating the expression of genes that are involved in lipogenesis and in regulating mitochondrial fatty acid oxidation. Plays an important role in body energy homeostasis. Contributes to the biosynthesis of membrane phospholipids, cholesterol esters and triglycerides. The sequence is that of Stearoyl-CoA desaturase (SCD) from Mesocricetus auratus (Golden hamster).